Consider the following 125-residue polypeptide: S-adenosylmethionine decarboxylase proenzyme (125 aa).

Serine 71 functions as the Schiff-base intermediate with substrate; via pyruvic acid in the catalytic mechanism. Serine 71 bears the Pyruvic acid (Ser); by autocatalysis mark. Histidine 76 functions as the Proton acceptor; for processing activity in the catalytic mechanism. The active-site Proton donor; for catalytic activity is the cysteine 91.

Belongs to the prokaryotic AdoMetDC family. Type 1 subfamily. Heterotetramer of two alpha and two beta chains arranged as a dimer of alpha/beta heterodimers. Pyruvate serves as cofactor. Post-translationally, is synthesized initially as an inactive proenzyme. Formation of the active enzyme involves a self-maturation process in which the active site pyruvoyl group is generated from an internal serine residue via an autocatalytic post-translational modification. Two non-identical subunits are generated from the proenzyme in this reaction, and the pyruvate is formed at the N-terminus of the alpha chain, which is derived from the carboxyl end of the proenzyme. The post-translation cleavage follows an unusual pathway, termed non-hydrolytic serinolysis, in which the side chain hydroxyl group of the serine supplies its oxygen atom to form the C-terminus of the beta chain, while the remainder of the serine residue undergoes an oxidative deamination to produce ammonia and the pyruvoyl group blocking the N-terminus of the alpha chain.

The catalysed reaction is S-adenosyl-L-methionine + H(+) = S-adenosyl 3-(methylsulfanyl)propylamine + CO2. It functions in the pathway amine and polyamine biosynthesis; S-adenosylmethioninamine biosynthesis; S-adenosylmethioninamine from S-adenosyl-L-methionine: step 1/1. Its function is as follows. Catalyzes the decarboxylation of S-adenosylmethionine to S-adenosylmethioninamine (dcAdoMet), the propylamine donor required for the synthesis of the polyamines spermine and spermidine from the diamine putrescine. This chain is S-adenosylmethionine decarboxylase proenzyme, found in Pyrobaculum aerophilum (strain ATCC 51768 / DSM 7523 / JCM 9630 / CIP 104966 / NBRC 100827 / IM2).